The following is a 797-amino-acid chain: Inactive deaminase YBR284W (797 aa).

Residues 627–647 (LVYLFYLSQIPMVVAPLNSIV) form a helical membrane-spanning segment.

This sequence belongs to the metallo-dependent hydrolases superfamily. Adenosine and AMP deaminases family.

It localises to the membrane. The sequence is that of Inactive deaminase YBR284W from Saccharomyces cerevisiae (strain ATCC 204508 / S288c) (Baker's yeast).